Here is a 797-residue protein sequence, read N- to C-terminus: Xaa-Pro dipeptidyl-peptidase (797 aa).

Catalysis depends on charge relay system residues Ser370, Asp490, and His521.

The protein belongs to the peptidase S15 family. Homodimer.

It is found in the cytoplasm. The catalysed reaction is Hydrolyzes Xaa-Pro-|- bonds to release unblocked, N-terminal dipeptides from substrates including Ala-Pro-|-p-nitroanilide and (sequentially) Tyr-Pro-|-Phe-Pro-|-Gly-Pro-|-Ile.. In terms of biological role, removes N-terminal dipeptides sequentially from polypeptides having unsubstituted N-termini provided that the penultimate residue is proline. The chain is Xaa-Pro dipeptidyl-peptidase from Lacticaseibacillus paracasei (strain ATCC 334 / BCRC 17002 / CCUG 31169 / CIP 107868 / KCTC 3260 / NRRL B-441) (Lactobacillus paracasei).